The following is an 884-amino-acid chain: Endoribonuclease ysh1 (884 aa).

Histidine 83, histidine 85, aspartate 87, histidine 88, histidine 174, and aspartate 195 together coordinate Zn(2+). Histidine 446 serves as the catalytic Proton donor. Histidine 468 is a binding site for Zn(2+). Disordered regions lie at residues 595 to 626 (EIGT…EEIP), 678 to 705 (PASV…LKFL), and 734 to 780 (PIER…QDPD). A compositionally biased stretch (basic and acidic residues) spans 605 to 619 (EDQQSESEEKQRMKE). Basic residues predominate over residues 684–695 (SAKHNKHHHHHH). Positions 742 to 758 (SSTESATTTTNGNGNSK) are enriched in low complexity. Positions 762 to 780 (EQLSSLESKTDGATPQDPD) are enriched in polar residues.

It belongs to the metallo-beta-lactamase superfamily. RNA-metabolizing metallo-beta-lactamase-like family. CPSF2/YSH1 subfamily.

It localises to the nucleus. Component of the cleavage factor I (CF I) involved in pre-mRNA 3'-end processing. This chain is Endoribonuclease ysh1 (ysh1), found in Emericella nidulans (strain FGSC A4 / ATCC 38163 / CBS 112.46 / NRRL 194 / M139) (Aspergillus nidulans).